A 159-amino-acid polypeptide reads, in one-letter code: ATP synthase subunit b (159 aa).

The chain crosses the membrane as a helical span at residues 4–24; that stretch reads VGINGTLIVQLVTFVILVALL.

It belongs to the ATPase B chain family. In terms of assembly, F-type ATPases have 2 components, F(1) - the catalytic core - and F(0) - the membrane proton channel. F(1) has five subunits: alpha(3), beta(3), gamma(1), delta(1), epsilon(1). F(0) has three main subunits: a(1), b(2) and c(10-14). The alpha and beta chains form an alternating ring which encloses part of the gamma chain. F(1) is attached to F(0) by a central stalk formed by the gamma and epsilon chains, while a peripheral stalk is formed by the delta and b chains.

It localises to the cell inner membrane. Functionally, f(1)F(0) ATP synthase produces ATP from ADP in the presence of a proton or sodium gradient. F-type ATPases consist of two structural domains, F(1) containing the extramembraneous catalytic core and F(0) containing the membrane proton channel, linked together by a central stalk and a peripheral stalk. During catalysis, ATP synthesis in the catalytic domain of F(1) is coupled via a rotary mechanism of the central stalk subunits to proton translocation. Its function is as follows. Component of the F(0) channel, it forms part of the peripheral stalk, linking F(1) to F(0). This chain is ATP synthase subunit b, found in Acidithiobacillus ferrooxidans (strain ATCC 23270 / DSM 14882 / CIP 104768 / NCIMB 8455) (Ferrobacillus ferrooxidans (strain ATCC 23270)).